Here is a 354-residue protein sequence, read N- to C-terminus: Protein RecA (354 aa).

65–72 (GPESSGKT) contacts ATP.

Belongs to the RecA family.

It is found in the cytoplasm. Its function is as follows. Can catalyze the hydrolysis of ATP in the presence of single-stranded DNA, the ATP-dependent uptake of single-stranded DNA by duplex DNA, and the ATP-dependent hybridization of homologous single-stranded DNAs. It interacts with LexA causing its activation and leading to its autocatalytic cleavage. The sequence is that of Protein RecA from Pseudomonas savastanoi pv. phaseolicola (strain 1448A / Race 6) (Pseudomonas syringae pv. phaseolicola (strain 1448A / Race 6)).